Consider the following 88-residue polypeptide: Cytochrome c oxidase subunit 6B2 (88 aa).

The 47-residue stretch at Thr-29–Trp-75 folds into the CHCH domain. The short motif at Cys-32–Cys-42 is the Cx9C motif element. Disulfide bonds link Cys-32/Cys-67 and Cys-42/Cys-56. Residues Cys-56–Cys-67 carry the Cx10C motif motif.

This sequence belongs to the cytochrome c oxidase subunit 6B family. In terms of assembly, component of the cytochrome c oxidase (complex IV, CIV), a multisubunit enzyme composed of 14 subunits. The complex is composed of a catalytic core of 3 subunits MT-CO1, MT-CO2 and MT-CO3, encoded in the mitochondrial DNA, and 11 supernumerary subunits COX4I1 (or COX4I2), COX5A, COX5B, COX6A2 (or COX6A1), COX6B1 (or COX6B2), COX6C, COX7A1 (or COX7A2), COX7B, COX7C, COX8B and NDUFA4, which are encoded in the nuclear genome. The complex exists as a monomer or a dimer and forms supercomplexes (SCs) in the inner mitochondrial membrane with NADH-ubiquinone oxidoreductase (complex I, CI) and ubiquinol-cytochrome c oxidoreductase (cytochrome b-c1 complex, complex III, CIII), resulting in different assemblies (supercomplex SCI(1)III(2)IV(1) and megacomplex MCI(2)III(2)IV(2)). In terms of tissue distribution, testis specific.

The protein resides in the mitochondrion inner membrane. It participates in energy metabolism; oxidative phosphorylation. Functionally, component of the cytochrome c oxidase, the last enzyme in the mitochondrial electron transport chain which drives oxidative phosphorylation. The respiratory chain contains 3 multisubunit complexes succinate dehydrogenase (complex II, CII), ubiquinol-cytochrome c oxidoreductase (cytochrome b-c1 complex, complex III, CIII) and cytochrome c oxidase (complex IV, CIV), that cooperate to transfer electrons derived from NADH and succinate to molecular oxygen, creating an electrochemical gradient over the inner membrane that drives transmembrane transport and the ATP synthase. Cytochrome c oxidase is the component of the respiratory chain that catalyzes the reduction of oxygen to water. Electrons originating from reduced cytochrome c in the intermembrane space (IMS) are transferred via the dinuclear copper A center (CU(A)) of subunit 2 and heme A of subunit 1 to the active site in subunit 1, a binuclear center (BNC) formed by heme A3 and copper B (CU(B)). The BNC reduces molecular oxygen to 2 water molecules using 4 electrons from cytochrome c in the IMS and 4 protons from the mitochondrial matrix. The polypeptide is Cytochrome c oxidase subunit 6B2 (COX6B2) (Bos taurus (Bovine)).